We begin with the raw amino-acid sequence, 463 residues long: tRNA modification GTPase MnmE (463 aa).

Positions 26, 88, and 127 each coordinate (6S)-5-formyl-5,6,7,8-tetrahydrofolate. In terms of domain architecture, TrmE-type G spans 224 to 383 (GLATAIIGRP…LEQRIAKMFF (160 aa)). Asparagine 234 contributes to the K(+) binding site. Residues 234-239 (NVGKSS), 253-259 (TDVAGTT), and 278-281 (DTAG) contribute to the GTP site. A Mg(2+)-binding site is contributed by serine 238. The K(+) site is built by threonine 253, valine 255, and threonine 258. Threonine 259 serves as a coordination point for Mg(2+). Lysine 463 contributes to the (6S)-5-formyl-5,6,7,8-tetrahydrofolate binding site.

This sequence belongs to the TRAFAC class TrmE-Era-EngA-EngB-Septin-like GTPase superfamily. TrmE GTPase family. In terms of assembly, homodimer. Heterotetramer of two MnmE and two MnmG subunits. It depends on K(+) as a cofactor.

It is found in the cytoplasm. In terms of biological role, exhibits a very high intrinsic GTPase hydrolysis rate. Involved in the addition of a carboxymethylaminomethyl (cmnm) group at the wobble position (U34) of certain tRNAs, forming tRNA-cmnm(5)s(2)U34. The polypeptide is tRNA modification GTPase MnmE (Lactiplantibacillus plantarum (strain ATCC BAA-793 / NCIMB 8826 / WCFS1) (Lactobacillus plantarum)).